Here is a 171-residue protein sequence, read N- to C-terminus: Skp-like protein (171 aa).

The N-terminal stretch at methionine 1–alanine 21 is a signal peptide.

Belongs to the Skp family.

This chain is Skp-like protein, found in Chlamydia pneumoniae (Chlamydophila pneumoniae).